The primary structure comprises 129 residues: Fluoride-specific ion channel FluC 1 (129 aa).

The next 3 helical transmembrane spans lie at 43-63 (ASLLLGLVAGAAGAGAPPAWV), 68-88 (VVSLVGTGLCGALSTYSTFSY), and 100-120 (LLAAANVAGSVLAAFGAAALG). Residues Gly78 and Ser81 each coordinate Na(+).

Belongs to the fluoride channel Fluc/FEX (TC 1.A.43) family.

It localises to the cell membrane. It catalyses the reaction fluoride(in) = fluoride(out). Na(+) is not transported, but it plays an essential structural role and its presence is essential for fluoride channel function. In terms of biological role, fluoride-specific ion channel. Important for reducing fluoride concentration in the cell, thus reducing its toxicity. The chain is Fluoride-specific ion channel FluC 1 from Frankia casuarinae (strain DSM 45818 / CECT 9043 / HFP020203 / CcI3).